A 140-amino-acid polypeptide reads, in one-letter code: Large ribosomal subunit protein uL11 (140 aa).

Belongs to the universal ribosomal protein uL11 family. Part of the ribosomal stalk of the 50S ribosomal subunit. Interacts with L10 and the large rRNA to form the base of the stalk. L10 forms an elongated spine to which L12 dimers bind in a sequential fashion forming a multimeric L10(L12)X complex. One or more lysine residues are methylated.

Its function is as follows. Forms part of the ribosomal stalk which helps the ribosome interact with GTP-bound translation factors. The protein is Large ribosomal subunit protein uL11 of Staphylococcus aureus (strain bovine RF122 / ET3-1).